Here is a 637-residue protein sequence, read N- to C-terminus: DNA gyrase subunit B (637 aa).

The Toprim domain occupies 421-535 (SEIYIVEGDS…HGYVYIAQPP (115 aa)). Mg(2+) contacts are provided by Glu-427, Asp-500, and Asp-502.

This sequence belongs to the type II topoisomerase GyrB family. In terms of assembly, heterotetramer, composed of two GyrA and two GyrB chains. In the heterotetramer, GyrA contains the active site tyrosine that forms a transient covalent intermediate with DNA, while GyrB binds cofactors and catalyzes ATP hydrolysis. It depends on Mg(2+) as a cofactor. Mn(2+) serves as cofactor. Requires Ca(2+) as cofactor.

The protein resides in the cytoplasm. The enzyme catalyses ATP-dependent breakage, passage and rejoining of double-stranded DNA.. Its function is as follows. A type II topoisomerase that negatively supercoils closed circular double-stranded (ds) DNA in an ATP-dependent manner to modulate DNA topology and maintain chromosomes in an underwound state. Negative supercoiling favors strand separation, and DNA replication, transcription, recombination and repair, all of which involve strand separation. Also able to catalyze the interconversion of other topological isomers of dsDNA rings, including catenanes and knotted rings. Type II topoisomerases break and join 2 DNA strands simultaneously in an ATP-dependent manner. This is DNA gyrase subunit B from Halalkalibacterium halodurans (strain ATCC BAA-125 / DSM 18197 / FERM 7344 / JCM 9153 / C-125) (Bacillus halodurans).